Here is a 325-residue protein sequence, read N- to C-terminus: Putative 1-aminocyclopropane-1-carboxylate deaminase (325 aa).

At lysine 54 the chain carries N6-(pyridoxal phosphate)lysine.

Belongs to the ACC deaminase/D-cysteine desulfhydrase family. Pyridoxal 5'-phosphate is required as a cofactor.

The enzyme catalyses 1-aminocyclopropane-1-carboxylate + H2O = 2-oxobutanoate + NH4(+). The chain is Putative 1-aminocyclopropane-1-carboxylate deaminase from Pyrococcus horikoshii (strain ATCC 700860 / DSM 12428 / JCM 9974 / NBRC 100139 / OT-3).